The following is a 304-amino-acid chain: Non-specific ribonucleoside hydrolase RihC (304 aa).

Histidine 233 is an active-site residue.

It belongs to the IUNH family. RihC subfamily.

Functionally, hydrolyzes both purine and pyrimidine ribonucleosides with a broad-substrate specificity. The chain is Non-specific ribonucleoside hydrolase RihC from Shigella sonnei (strain Ss046).